The chain runs to 634 residues: Threonine--tRNA ligase (634 aa).

One can recognise a TGS domain in the interval 1–61 (MINITLPDGS…DHDASLRIIT (61 aa)). Residues 243–534 (DHRRIGKAQD…LIEHHAGAFP (292 aa)) are catalytic. Residues Cys334, His385, and His511 each contribute to the Zn(2+) site.

Belongs to the class-II aminoacyl-tRNA synthetase family. As to quaternary structure, homodimer. The cofactor is Zn(2+).

The protein resides in the cytoplasm. The enzyme catalyses tRNA(Thr) + L-threonine + ATP = L-threonyl-tRNA(Thr) + AMP + diphosphate + H(+). Catalyzes the attachment of threonine to tRNA(Thr) in a two-step reaction: L-threonine is first activated by ATP to form Thr-AMP and then transferred to the acceptor end of tRNA(Thr). Also edits incorrectly charged L-seryl-tRNA(Thr). In Xanthomonas oryzae pv. oryzae (strain MAFF 311018), this protein is Threonine--tRNA ligase.